Here is a 473-residue protein sequence, read N- to C-terminus: Glutamine synthetase (473 aa).

A GS beta-grasp domain is found at 15 to 100 (ENIKIIDLKF…ICSIKEPRTG (86 aa)). The GS catalytic domain maps to 107–473 (PRTIAAKAVE…PYEFSLYYDC (367 aa)). Glutamate 132 is a binding site for Mn(2+). Glutamate 134 serves as a coordination point for Mg(2+). Glutamate 210 provides a ligand contact to ATP. Mg(2+)-binding residues include glutamate 215 and glutamate 223. Residues 267 to 268 (NG) and glycine 268 contribute to the L-glutamate site. Mg(2+) is bound at residue histidine 272. ATP is bound by residues 274–276 (HQS) and serine 276. 3 residues coordinate L-glutamate: arginine 324, glutamate 330, and arginine 342. Positions 342, 347, and 356 each coordinate ATP. Glutamate 361 contacts Mn(2+). Arginine 363 is a binding site for L-glutamate. Residue tyrosine 401 is modified to O-AMP-tyrosine.

It belongs to the glutamine synthetase family. Oligomer of 12 subunits arranged in the form of two hexagons. Mg(2+) is required as a cofactor.

It is found in the cytoplasm. It catalyses the reaction L-glutamate + NH4(+) + ATP = L-glutamine + ADP + phosphate + H(+). Its activity is regulated as follows. Inhibited by ADP (90%), AMP (80%), alanine (52%) and aspartate (41%). The activity of this enzyme could be controlled by adenylation under conditions of abundant glutamine. Involved in nitrogen metabolism via ammonium assimilation. Catalyzes the ATP-dependent biosynthesis of glutamine from glutamate and ammonia. The sequence is that of Glutamine synthetase from Synechocystis sp. (strain ATCC 27184 / PCC 6803 / Kazusa).